Reading from the N-terminus, the 304-residue chain is Probable 5-dehydro-4-deoxyglucarate dehydratase (304 aa).

The protein belongs to the DapA family.

The enzyme catalyses 5-dehydro-4-deoxy-D-glucarate + H(+) = 2,5-dioxopentanoate + CO2 + H2O. It participates in carbohydrate acid metabolism; D-glucarate degradation; 2,5-dioxopentanoate from D-glucarate: step 2/2. The polypeptide is Probable 5-dehydro-4-deoxyglucarate dehydratase (Arthrobacter sp. (strain FB24)).